The chain runs to 163 residues: Urease accessory protein UreE (163 aa).

Positions 144–163 (QPEPGAYGGSSAGSHDGHHH) are disordered.

The protein belongs to the UreE family.

Its subcellular location is the cytoplasm. Its function is as follows. Involved in urease metallocenter assembly. Binds nickel. Probably functions as a nickel donor during metallocenter assembly. The sequence is that of Urease accessory protein UreE from Aliivibrio fischeri (strain ATCC 700601 / ES114) (Vibrio fischeri).